Reading from the N-terminus, the 70-residue chain is DNA-directed RNA polymerase subunit omega (70 aa).

Belongs to the RNA polymerase subunit omega family. The RNAP catalytic core consists of 2 alpha, 1 beta, 1 beta' and 1 omega subunit. When a sigma factor is associated with the core the holoenzyme is formed, which can initiate transcription.

The enzyme catalyses RNA(n) + a ribonucleoside 5'-triphosphate = RNA(n+1) + diphosphate. Functionally, promotes RNA polymerase assembly. Latches the N- and C-terminal regions of the beta' subunit thereby facilitating its interaction with the beta and alpha subunits. In Staphylococcus saprophyticus subsp. saprophyticus (strain ATCC 15305 / DSM 20229 / NCIMB 8711 / NCTC 7292 / S-41), this protein is DNA-directed RNA polymerase subunit omega.